We begin with the raw amino-acid sequence, 206 residues long: Large ribosomal subunit protein uL4 (206 aa).

Over residues 66 to 77 (QKGTGRARHHSA) the composition is skewed to basic residues. The tract at residues 66–96 (QKGTGRARHHSARAPQFRGGGQAHGPVVRSH) is disordered.

Belongs to the universal ribosomal protein uL4 family. In terms of assembly, part of the 50S ribosomal subunit.

Functionally, one of the primary rRNA binding proteins, this protein initially binds near the 5'-end of the 23S rRNA. It is important during the early stages of 50S assembly. It makes multiple contacts with different domains of the 23S rRNA in the assembled 50S subunit and ribosome. Forms part of the polypeptide exit tunnel. In Brucella anthropi (strain ATCC 49188 / DSM 6882 / CCUG 24695 / JCM 21032 / LMG 3331 / NBRC 15819 / NCTC 12168 / Alc 37) (Ochrobactrum anthropi), this protein is Large ribosomal subunit protein uL4.